Here is a 326-residue protein sequence, read N- to C-terminus: Flap endonuclease 1 (326 aa).

The interval 1 to 98 is N-domain; that stretch reads MGVQFNDSIP…KTREERRKVK (98 aa). Positions 27, 80, 152, 154, 173, 175, and 224 each coordinate Mg(2+). Residues 116-245 form an I-domain region; the sequence is DMQKYAKRIN…KKALTIIKNK (130 aa). Residues 318–326 form an interaction with PCNA region; it reads SQTSLDSWF.

The protein belongs to the XPG/RAD2 endonuclease family. FEN1 subfamily. In terms of assembly, interacts with PCNA. PCNA stimulates the nuclease activity without altering cleavage specificity. Mg(2+) serves as cofactor.

Its function is as follows. Structure-specific nuclease with 5'-flap endonuclease and 5'-3' exonuclease activities involved in DNA replication and repair. During DNA replication, cleaves the 5'-overhanging flap structure that is generated by displacement synthesis when DNA polymerase encounters the 5'-end of a downstream Okazaki fragment. Binds the unpaired 3'-DNA end and kinks the DNA to facilitate 5' cleavage specificity. Cleaves one nucleotide into the double-stranded DNA from the junction in flap DNA, leaving a nick for ligation. Also involved in the base excision repair (BER) pathway. Acts as a genome stabilization factor that prevents flaps from equilibrating into structures that lead to duplications and deletions. Also possesses 5'-3' exonuclease activity on nicked or gapped double-stranded DNA. This chain is Flap endonuclease 1, found in Methanococcus aeolicus (strain ATCC BAA-1280 / DSM 17508 / OCM 812 / Nankai-3).